The following is a 559-amino-acid chain: WD repeat-containing protein JIP5 (559 aa).

9 WD repeats span residues 26-67, 77-116, 117-156, 162-201, 207-247, 265-306, 313-347, 354-394, and 428-470; these read QYSD…NYLQ, ADGKKSKKVKFWTVYDIINENKDNADTGSDSGVELIWKTK, RHKGSVRCIALDSDGQFVYTVGTDNVLKKADVLTGKVVKK, DNGGKYTKMVKSPTHSLLILGDENGTVIVLNSETLQETNR, NGDD…ESDF, DQED…LEDQ, AKEESIDCIVPTLQDDNCIWCGCSNGNIYKADIKK, RNHS…SEEE, and DSDG…SDDE. Disordered regions lie at residues 386 to 500 and 515 to 559; these read SRNE…LIGL and EESE…FEGL. Over residues 391–417 the composition is skewed to acidic residues; sequence SEEEDDEESESFSDSDSDSDSDSDSDS. Residues 418-428 show a composition bias toward basic and acidic residues; sequence DSDRDRDRDSD. Positions 482 to 494 are enriched in acidic residues; sequence DMDDIDEGSDSSE. Positions 520–534 are enriched in basic and acidic residues; sequence EGEKLQKKRKNEPSK. The span at 535 to 544 shows a compositional bias: basic residues; the sequence is KNTKNLKKVK.

This sequence belongs to the WD repeat WDR55 family.

Its subcellular location is the nucleus. It localises to the nucleolus. This chain is WD repeat-containing protein JIP5 (JIP5), found in Vanderwaltozyma polyspora (strain ATCC 22028 / DSM 70294 / BCRC 21397 / CBS 2163 / NBRC 10782 / NRRL Y-8283 / UCD 57-17) (Kluyveromyces polysporus).